A 255-amino-acid chain; its full sequence is ATP synthase subunit a (255 aa).

Positions 1–6 are cleaved as a propeptide — removed in mature form; sequence MNFIIN. Transmembrane regions (helical) follow at residues 32–52, 91–111, 121–141, 159–200, and 219–251; these read LTSFSIYSIAVVALILGFSIL, LFPFMFSLFMYILIANVVSLV, LIWTIGLSVAIWIGCTLTGLA, PLVP…LAGL, and LSILLGIVALESAIAFIQAIVFTILTCSYIKDA.

F-type ATP synthases have 2 components, the catalytic core F(1) and the membrane-embedded component F(0), linked together by a central stalk and a peripheral stalk. The central stalk, also called rotor shaft, is often seen as part of F(1). The peripheral stalk is seen as part of F(0). F(0) contains the membrane channel next to the rotor. F-type ATP synthases form dimers but each monomer functions independently in ATP generation. The dimer consists of 17 different polypeptides: ATP1 (subunit alpha, 3 molecules per monomer, part of F(1)), ATP2 (subunit beta, 3 copies per monomer, part of F(1)), ATP3 (subunit gamma, part of the central stalk), ATP4 (subunit b, part of the peripheral stalk), ATP5/OSCP (subunit 5/OSCP, part of the peripheral stalk), ATP6 (subunit a, part of the peripheral stalk), ATP7 (subunit d, part of the peripheral stalk), ATP8 (subunit 8, part of the peripheral stalk), OLI1 (subunit c, part of the rotor, 10 molecules per monomer), ATP14 (subunit h, part of the peripheral stalk), ATP15 (subunit epsilon, part of the central stalk), ATP16 (subunit delta, part of the central stalk), ATP17 (subunit f, part of the peripheral stalk), ATP18 (subunit i/j, part of the peripheral stalk), ATP19 (subunit k, dimer-specific, at interface between monomers), ATP20 (subunit g, at interface between monomers), TIM11 (subunit e, at interface between monomers).

Its subcellular location is the mitochondrion inner membrane. Mitochondrial membrane ATP synthase (F(1)F(0) ATP synthase or Complex V) produces ATP from ADP in the presence of a proton gradient across the membrane which is generated by electron transport complexes of the respiratory chain. F-type ATP synthases consist of two structural domains, F(1) - containing the extramembraneous catalytic core, and F(0) - containing the membrane proton channel, linked together by a central stalk and a peripheral stalk. During catalysis, ATP synthesis in the catalytic domain of F(1) is coupled via a rotary mechanism of the central stalk subunits to proton translocation. Key component of the proton channel; it may play a direct role in the translocation of protons across the membrane. This Yarrowia lipolytica (strain CLIB 122 / E 150) (Yeast) protein is ATP synthase subunit a.